We begin with the raw amino-acid sequence, 174 residues long: Large ribosomal subunit protein uL18 (174 aa).

It belongs to the universal ribosomal protein uL18 family. Part of the 50S ribosomal subunit. Contacts the 5S and 23S rRNAs.

Its function is as follows. This is one of the proteins that bind and probably mediate the attachment of the 5S RNA into the large ribosomal subunit, where it forms part of the central protuberance. The polypeptide is Large ribosomal subunit protein uL18 (Methanosarcina mazei (strain ATCC BAA-159 / DSM 3647 / Goe1 / Go1 / JCM 11833 / OCM 88) (Methanosarcina frisia)).